Consider the following 84-residue polypeptide: Keratin-associated protein 19-4 (84 aa).

Belongs to the KRTAP type 19 family. As to quaternary structure, interacts with hair keratins.

In the hair cortex, hair keratin intermediate filaments are embedded in an interfilamentous matrix, consisting of hair keratin-associated proteins (KRTAP), which are essential for the formation of a rigid and resistant hair shaft through their extensive disulfide bond cross-linking with abundant cysteine residues of hair keratins. The matrix proteins include the high-sulfur and high-glycine-tyrosine keratins. The chain is Keratin-associated protein 19-4 (KRTAP19-4) from Homo sapiens (Human).